Consider the following 283-residue polypeptide: Diaminopimelate epimerase (283 aa).

Substrate contacts are provided by asparagine 11 and asparagine 65. Cysteine 74 functions as the Proton donor in the catalytic mechanism. Residues 75 to 76 (GN), asparagine 163, asparagine 196, and 214 to 215 (ER) contribute to the substrate site. The Proton acceptor role is filled by cysteine 223. 224 to 225 (GT) serves as a coordination point for substrate.

This sequence belongs to the diaminopimelate epimerase family. In terms of assembly, homodimer.

The protein resides in the cytoplasm. It catalyses the reaction (2S,6S)-2,6-diaminopimelate = meso-2,6-diaminopimelate. Its pathway is amino-acid biosynthesis; L-lysine biosynthesis via DAP pathway; DL-2,6-diaminopimelate from LL-2,6-diaminopimelate: step 1/1. In terms of biological role, catalyzes the stereoinversion of LL-2,6-diaminopimelate (L,L-DAP) to meso-diaminopimelate (meso-DAP), a precursor of L-lysine and an essential component of the bacterial peptidoglycan. In Desulfitobacterium hafniense (strain DSM 10664 / DCB-2), this protein is Diaminopimelate epimerase.